Consider the following 311-residue polypeptide: Prohibitin-2 (311 aa).

A helical transmembrane segment spans residues 39–57; sequence GAGMGLAGLVLLGGAAFVA. An AIM motif is present at residues 141-144; sequence YRTL.

It belongs to the prohibitin family. In terms of assembly, the mitochondrial prohibitin complex consists of two subunits (PHB1 and PHB2). The subunits assemble into a membrane-associated ring-shaped supercomplex of approximately 1 mDa. Interacts with ATG24/SNX4; the interaction is direct and plays a role in mitophagy.

Its subcellular location is the mitochondrion inner membrane. Its function is as follows. Prohibitin probably acts as a holdase/unfoldase for the stabilization of newly synthesized mitochondrial proteins. Involved in mitophagy. Required for the switch to necrotrophic growth. This is Prohibitin-2 from Colletotrichum higginsianum (strain IMI 349063) (Crucifer anthracnose fungus).